Consider the following 68-residue polypeptide: ATP synthase F(0) complex subunit 8 (68 aa).

Residues 8–24 (TWFTTILSMFLTLFIIF) traverse the membrane as a helical segment. Lys-54 carries the N6-acetyllysine; alternate modification. N6-succinyllysine; alternate is present on Lys-54. Lys-57 is modified (N6-acetyllysine).

The protein belongs to the ATPase protein 8 family. In terms of assembly, component of the ATP synthase complex composed at least of ATP5F1A/subunit alpha, ATP5F1B/subunit beta, ATP5MC1/subunit c (homooctomer), MT-ATP6/subunit a, MT-ATP8/subunit 8, ATP5ME/subunit e, ATP5MF/subunit f, ATP5MG/subunit g, ATP5MK/subunit k, ATP5MJ/subunit j, ATP5F1C/subunit gamma, ATP5F1D/subunit delta, ATP5F1E/subunit epsilon, ATP5PF/subunit F6, ATP5PB/subunit b, ATP5PD/subunit d, ATP5PO/subunit OSCP. ATP synthase complex consists of a soluble F(1) head domain (subunits alpha(3) and beta(3)) - the catalytic core - and a membrane F(0) domain - the membrane proton channel (subunits c, a, 8, e, f, g, k and j). These two domains are linked by a central stalk (subunits gamma, delta, and epsilon) rotating inside the F1 region and a stationary peripheral stalk (subunits F6, b, d, and OSCP). Interacts with PRICKLE3.

The protein localises to the mitochondrion membrane. Subunit 8, of the mitochondrial membrane ATP synthase complex (F(1)F(0) ATP synthase or Complex V) that produces ATP from ADP in the presence of a proton gradient across the membrane which is generated by electron transport complexes of the respiratory chain. ATP synthase complex consist of a soluble F(1) head domain - the catalytic core - and a membrane F(1) domain - the membrane proton channel. These two domains are linked by a central stalk rotating inside the F(1) region and a stationary peripheral stalk. During catalysis, ATP synthesis in the catalytic domain of F(1) is coupled via a rotary mechanism of the central stalk subunits to proton translocation. In vivo, can only synthesize ATP although its ATP hydrolase activity can be activated artificially in vitro. Part of the complex F(0) domain. This chain is ATP synthase F(0) complex subunit 8, found in Hippopotamus amphibius (Hippopotamus).